Consider the following 124-residue polypeptide: Putative iron-sulfur cluster insertion protein ErpA (124 aa).

C52, C116, and C118 together coordinate iron-sulfur cluster.

Belongs to the HesB/IscA family. In terms of assembly, homodimer. Iron-sulfur cluster serves as cofactor.

Functionally, required for insertion of 4Fe-4S clusters. The polypeptide is Putative iron-sulfur cluster insertion protein ErpA (Ralstonia nicotianae (strain ATCC BAA-1114 / GMI1000) (Ralstonia solanacearum)).